Reading from the N-terminus, the 231-residue chain is Transmembrane protein 225 (231 aa).

Residues 1-13 (MMRIPNRSIQAAN) are Cytoplasmic-facing. Residues 14–34 (IFFSSGAILLLIAGLIMENWV) traverse the membrane as a helical segment. Over 35–71 (ELIPKVRKDKVTHSPWLGCCPPFWPEESLEAIRRMMM) the chain is Extracellular. A helical transmembrane segment spans residues 72 to 92 (MSLNISIYLNLIIGLQFTYMI). The Cytoplasmic portion of the chain corresponds to 93-99 (SQNKCVH). A helical membrane pass occupies residues 100-120 (LLIGFLSFFTGCLLFYAIIVY). The Extracellular segment spans residues 121–139 (HHKLNKGQYVYFVNYKTKW). The chain crosses the membrane as a helical span at residues 140–160 (IVFTIYLTIALFLTCGIFSFI). Over 161–231 (QCTNRCACMK…LQSRRVTWAL (71 aa)) the chain is Cytoplasmic. Residues 225–229 (RRVTW) carry the RVxF motif.

Interacts (via RVxF motif) with PPP1CC. In terms of tissue distribution, expressed in testis, specifically in spermatocytes and round spermatids.

Its subcellular location is the cytoplasmic vesicle. It localises to the secretory vesicle. It is found in the acrosome membrane. Probably inhibits protein phosphatase 1 (PP1) in sperm via binding to catalytic subunit PPP1CC. The polypeptide is Transmembrane protein 225 (Tmem225) (Rattus norvegicus (Rat)).